We begin with the raw amino-acid sequence, 449 residues long: Tubulin alpha-1C chain (449 aa).

The MREC motif signature appears at 1 to 4; it reads MREC. Gln11 contacts GTP. At Lys40 the chain carries N6-acetyllysine. Residues Glu71, Ser140, Gly144, Thr145, Thr179, Asn206, and Asn228 each contribute to the GTP site. Glu71 contributes to the Mg(2+) binding site. Residue Glu254 is part of the active site. A 3'-nitrotyrosine modification is found at Tyr282. Tyr432 bears the Phosphotyrosine mark. Ser439 is modified (phosphoserine). Position 449 is a 3'-nitrotyrosine (Tyr449).

Belongs to the tubulin family. As to quaternary structure, dimer of alpha and beta chains. A typical microtubule is a hollow water-filled tube with an outer diameter of 25 nm and an inner diameter of 15 nM. Alpha-beta heterodimers associate head-to-tail to form protofilaments running lengthwise along the microtubule wall with the beta-tubulin subunit facing the microtubule plus end conferring a structural polarity. Microtubules usually have 13 protofilaments but different protofilament numbers can be found in some organisms and specialized cells. Mg(2+) serves as cofactor. Some glutamate residues at the C-terminus are polyglycylated, resulting in polyglycine chains on the gamma-carboxyl group. Glycylation is mainly limited to tubulin incorporated into axonemes (cilia and flagella) whereas glutamylation is prevalent in neuronal cells, centrioles, axonemes, and the mitotic spindle. Both modifications can coexist on the same protein on adjacent residues, and lowering polyglycylation levels increases polyglutamylation, and reciprocally. Cilia and flagella glycylation is required for their stability and maintenance. Flagella glycylation controls sperm motility. In terms of processing, some glutamate residues at the C-terminus are polyglutamylated, resulting in polyglutamate chains on the gamma-carboxyl group. Polyglutamylation plays a key role in microtubule severing by spastin (SPAST). SPAST preferentially recognizes and acts on microtubules decorated with short polyglutamate tails: severing activity by SPAST increases as the number of glutamates per tubulin rises from one to eight, but decreases beyond this glutamylation threshold. Glutamylation is also involved in cilia motility. Post-translationally, acetylation of alpha chains at Lys-40 is located inside the microtubule lumen. This modification has been correlated with increased microtubule stability, intracellular transport and ciliary assembly. Methylation of alpha chains at Lys-40 is found in mitotic microtubules and is required for normal mitosis and cytokinesis contributing to genomic stability. In terms of processing, nitration of Tyr-449 is irreversible and interferes with normal dynein intracellular distribution. Post-translationally, undergoes a tyrosination/detyrosination cycle, the cyclic removal and re-addition of a C-terminal tyrosine residue by the enzymes tubulin tyrosine carboxypeptidase (MATCAP1, VASH1 or VASH2) and tubulin tyrosine ligase (TTL), respectively. Tyrosination promotes microtubule interaction with CAP-Gly domain-containing proteins such as CLIP1, CLIP2 and DCTN1. Tyrosination regulates the initiation of dynein-dynactin motility via interaction with DCTN1, which brings the dynein-dynactin complex into contact with microtubules. In neurons, tyrosinated tubulins mediate the initiation of retrograde vesicle transport. In terms of processing, detyrosination is involved in metaphase plate congression by guiding chromosomes during mitosis: detyrosination promotes interaction with CENPE, promoting pole-proximal transport of chromosomes toward the equator. Detyrosination increases microtubules-dependent mechanotransduction in dystrophic cardiac and skeletal muscle. In cardiomyocytes, detyrosinated microtubules are required to resist to contractile compression during contraction: detyrosination promotes association with desmin (DES) at force-generating sarcomeres, leading to buckled microtubules and mechanical resistance to contraction.

It localises to the cytoplasm. Its subcellular location is the cytoskeleton. The catalysed reaction is GTP + H2O = GDP + phosphate + H(+). In terms of biological role, tubulin is the major constituent of microtubules, a cylinder consisting of laterally associated linear protofilaments composed of alpha- and beta-tubulin heterodimers. Microtubules grow by the addition of GTP-tubulin dimers to the microtubule end, where a stabilizing cap forms. Below the cap, tubulin dimers are in GDP-bound state, owing to GTPase activity of alpha-tubulin. This Rattus norvegicus (Rat) protein is Tubulin alpha-1C chain (Tuba1c).